A 461-amino-acid chain; its full sequence is D-phenylhydantoinase (461 aa).

A divalent metal cation-binding residues include His59, His61, and Lys151. Lys151 bears the N6-carboxylysine mark. Tyr156 contacts substrate. 2 residues coordinate a divalent metal cation: His182 and His239. A substrate-binding site is contributed by Ser286. Asp313 provides a ligand contact to a divalent metal cation. Asn335 lines the substrate pocket.

Belongs to the metallo-dependent hydrolases superfamily. Hydantoinase/dihydropyrimidinase family. Homotetramer. It depends on a divalent metal cation as a cofactor. Post-translationally, carboxylation allows a single lysine to coordinate two divalent metal cations.

The catalysed reaction is D-5-phenylhydantoin + H2O = N-carbamoyl-D-phenylglycine + H(+). Catalyzes the stereospecific hydrolysis of the cyclic amide bond of D-hydantoin derivatives with an aromatic side chains at the 5'-position. Has no activity on dihydropyrimidines. The physiological function is unknown. This chain is D-phenylhydantoinase, found in Shigella boydii serotype 4 (strain Sb227).